The primary structure comprises 253 residues: Probable transcriptional regulatory protein Hore_12350 (253 aa).

Residues 1 to 21 form a disordered region; sequence MAGHSKWANIKHKKAKEDRKR.

This sequence belongs to the TACO1 family.

The protein localises to the cytoplasm. This is Probable transcriptional regulatory protein Hore_12350 from Halothermothrix orenii (strain H 168 / OCM 544 / DSM 9562).